A 439-amino-acid chain; its full sequence is Xaa-Pro dipeptidase (439 aa).

Mn(2+)-binding residues include Asp244, Asp255, His335, Glu380, and Glu419.

This sequence belongs to the peptidase M24B family. Bacterial-type prolidase subfamily. Mn(2+) is required as a cofactor.

The enzyme catalyses Xaa-L-Pro dipeptide + H2O = an L-alpha-amino acid + L-proline. Splits dipeptides with a prolyl residue in the C-terminal position. This chain is Xaa-Pro dipeptidase, found in Shewanella oneidensis (strain ATCC 700550 / JCM 31522 / CIP 106686 / LMG 19005 / NCIMB 14063 / MR-1).